The primary structure comprises 425 residues: Serine hydroxymethyltransferase (425 aa).

(6S)-5,6,7,8-tetrahydrofolate-binding positions include Leu-128 and Gly-132 to Leu-134. Lys-237 carries the N6-(pyridoxal phosphate)lysine modification.

The protein belongs to the SHMT family. Homodimer. It depends on pyridoxal 5'-phosphate as a cofactor.

Its subcellular location is the cytoplasm. The enzyme catalyses (6R)-5,10-methylene-5,6,7,8-tetrahydrofolate + glycine + H2O = (6S)-5,6,7,8-tetrahydrofolate + L-serine. Its pathway is one-carbon metabolism; tetrahydrofolate interconversion. It participates in amino-acid biosynthesis; glycine biosynthesis; glycine from L-serine: step 1/1. Catalyzes the reversible interconversion of serine and glycine with tetrahydrofolate (THF) serving as the one-carbon carrier. This reaction serves as the major source of one-carbon groups required for the biosynthesis of purines, thymidylate, methionine, and other important biomolecules. Also exhibits THF-independent aldolase activity toward beta-hydroxyamino acids, producing glycine and aldehydes, via a retro-aldol mechanism. This Wolbachia sp. subsp. Drosophila simulans (strain wRi) protein is Serine hydroxymethyltransferase.